Reading from the N-terminus, the 473-residue chain is MSKLIPVIMAGGIGSRLWPLSREEHPKQFLSVDGELSMLQNTIKRLTPLLAGEPLVICNDSHRFLVAEQLRAINKLANNIILEPVGRNTAPAIALAAFCSLQNVVDEDPLLLVLAADHVIRDEKVFLKAINHAEFFATQGKLVTFGIVPTQAETGYGYICRGEAIGEDAFSVAEFVEKPDFDTARHYVESEKYYWNSGMFLFRASSYLQELKDLSPDIYQACENAVGSINPDLDFIRIDKEAFAMCPSDSIDYAVMEHTRHAVVVPMNAGWSDVGSWSSLWDISKKDPQRNVLHGDIFAYNSKDNYIYSEKSFISTIGVNNLVIVQTADALLVSDKDSVQDVKKVVDYLKANNRNEHKKHLEVFRPWGKFSVIHSGDNYLVKRITVKPGAKFAAQMHLHRAEHWIVVSGTACITKGEEIFTISENESTFIPANTVHTLKNPATIPLELIEIQSGTYLAEDDIIRLEKHSGYLE.

This sequence belongs to the mannose-6-phosphate isomerase type 2 family. In terms of assembly, homodimer.

It carries out the reaction alpha-D-mannose 1-phosphate + GTP + H(+) = GDP-alpha-D-mannose + diphosphate. The protein operates within nucleotide-sugar biosynthesis; GDP-alpha-D-mannose biosynthesis; GDP-alpha-D-mannose from alpha-D-mannose 1-phosphate (GTP route): step 1/1. It functions in the pathway bacterial outer membrane biogenesis; LPS O-antigen biosynthesis. Its function is as follows. Involved in GDP-mannose biosynthesis which serves as the activated sugar nucleotide precursor for mannose residues in cell surface polysaccharides. This enzyme participates in synthesis of the LPS group C2 O antigen. The chain is Mannose-1-phosphate guanylyltransferase (rfbM) from Salmonella muenchen.